An 83-amino-acid polypeptide reads, in one-letter code: MSVRIRLKRMGAKKRPYYRIVVMDSASPRDGRAIEELGYYHPVEKQNQVKINENKFRDWIGKGAIPSDTVKKILNKNNFKVES.

The protein belongs to the bacterial ribosomal protein bS16 family.

This chain is Small ribosomal subunit protein bS16, found in Borrelia turicatae (strain 91E135).